Consider the following 3411-residue polypeptide: Genome polyprotein (3411 aa).

The Cytoplasmic segment spans residues methionine 1–aspartate 104. The hydrophobic; homodimerization of capsid protein C stretch occupies residues proline 38–leucine 72. The propeptide at serine 102–glycine 121 is ER anchor for the capsid protein C, removed in mature form by serine protease NS3. A helical transmembrane segment spans residues valine 105–valine 125. At arginine 126–arginine 244 the chain is on the extracellular side. Residues asparagine 134 and asparagine 150 are each glycosylated (N-linked (GlcNAc...) asparagine; by host). Residues tryptophan 245–serine 265 traverse the membrane as a helical segment. Topologically, residues asparagine 266–arginine 270 are cytoplasmic. A helical membrane pass occupies residues valine 271–serine 285. Residues alanine 286–leucine 730 are Extracellular-facing. Intrachain disulfides connect cysteine 288/cysteine 315, cysteine 345/cysteine 401, cysteine 345/cysteine 406, cysteine 359/cysteine 390, cysteine 377/cysteine 401, cysteine 377/cysteine 406, cysteine 467/cysteine 568, and cysteine 585/cysteine 615. A fusion peptide region spans residues aspartate 383–glycine 396. A helical membrane pass occupies residues phenylalanine 731 to isoleucine 751. Topologically, residues asparagine 752–threonine 757 are extracellular. A helical membrane pass occupies residues methionine 758–alanine 778. At aspartate 779–glutamate 1132 the chain is on the extracellular side. Disulfide bonds link cysteine 782–cysteine 793, cysteine 833–cysteine 921, cysteine 957–cysteine 1002, cysteine 1058–cysteine 1107, cysteine 1069–cysteine 1091, and cysteine 1090–cysteine 1094. N-linked (GlcNAc...) asparagine; by host glycosylation is found at asparagine 908 and asparagine 986. Residues isoleucine 1133–lysine 1153 traverse the membrane as a helical segment. The Cytoplasmic segment spans residues arginine 1154–alanine 1201. A helical transmembrane segment spans residues methionine 1202–leucine 1222. Topologically, residues arginine 1223 to proline 1287 are lumenal. A helical membrane pass occupies residues valine 1288 to valine 1308. Topologically, residues leucine 1309–serine 1355 are cytoplasmic. Residues isoleucine 1356–phenylalanine 1376 form a helical membrane-spanning segment. Topologically, residues glutamine 1377–glutamate 1378 are lumenal. The helical transmembrane segment at methionine 1379–alanine 1399 threads the bilayer. Topologically, residues glycine 1400–leucine 1456 are cytoplasmic. The interval leucine 1407 to valine 1446 is interacts with and activates NS3 protease. Positions alanine 1457–phenylalanine 1477 form an intramembrane region, helical. Residues histidine 1478–alanine 2157 are Cytoplasmic-facing. The 181-residue stretch at serine 1485–leucine 1665 folds into the Peptidase S7 domain. Residues histidine 1537, aspartate 1561, and serine 1622 each act as charge relay system; for serine protease NS3 activity in the active site. In terms of domain architecture, Helicase ATP-binding spans proline 1669–glutamine 1825. Residues lysine 1673–lysine 1676 are important for RNA-binding. An ATP-binding site is contributed by phenylalanine 1682–threonine 1689. A DEAH box motif is present at residues aspartate 1773 to histidine 1776. Residues glutamate 1820–tyrosine 1997 enclose the Helicase C-terminal domain. At lysine 1877 the chain carries N6-acetyllysine; by host. The interval alanine 1942 to tyrosine 1961 is disordered. Residues methionine 2158 to phenylalanine 2178 traverse the membrane as a helical segment. Over methionine 2179–arginine 2186 the chain is Lumenal. Residues methionine 2187–lysine 2207 constitute an intramembrane region (helical). Over proline 2208 to threonine 2209 the chain is Lumenal. Residues histidine 2210–glycine 2230 traverse the membrane as a helical segment. Residues glutamine 2231–alanine 2241 are Cytoplasmic-facing. The chain crosses the membrane as a helical span at residues phenylalanine 2242–leucine 2262. Over glutamate 2263–glycine 2293 the chain is Lumenal. The segment at residues alanine 2294 to isoleucine 2314 is an intramembrane region (helical). The Lumenal portion of the chain corresponds to lysine 2315–isoleucine 2360. Residues threonine 2361–leucine 2380 traverse the membrane as a helical segment. Topologically, residues proline 2381–valine 2421 are cytoplasmic. Residues leucine 2422 to methionine 2442 form a helical membrane-spanning segment. Over cysteine 2443–threonine 2445 the chain is Lumenal. Residues proline 2446–glycine 2466 traverse the membrane as a helical segment. Topologically, residues asparagine 2467–isoleucine 3411 are cytoplasmic. An mRNA cap 0-1 NS5-type MT domain is found at glycine 2507–serine 2771. S-adenosyl-L-methionine is bound at residue serine 2562. Position 2562 is a phosphoserine (serine 2562). Lysine 2567 (for 2'-O-MTase activity) is an active-site residue. 6 residues coordinate S-adenosyl-L-methionine: glycine 2592, tryptophan 2593, threonine 2610, leucine 2611, aspartate 2637, and isoleucine 2638. The For 2'-O-MTase activity role is filled by aspartate 2652. Isoleucine 2653 is an S-adenosyl-L-methionine binding site. Catalysis depends on for 2'-O-MTase activity residues lysine 2688 and glutamate 2724. Tyrosine 2726 is a binding site for S-adenosyl-L-methionine. Residues arginine 2878–arginine 2911 carry the Nuclear localization signal motif. Zn(2+)-binding residues include glutamate 2945, histidine 2949, cysteine 2954, and cysteine 2957. The 153-residue stretch at glycine 3035–alanine 3187 folds into the RdRp catalytic domain. Zn(2+)-binding residues include histidine 3222, cysteine 3238, and cysteine 3357.

The protein in the N-terminal section; belongs to the class I-like SAM-binding methyltransferase superfamily. mRNA cap 0-1 NS5-type methyltransferase family. As to quaternary structure, homodimer. Interacts (via N-terminus) with host EXOC1 (via C-terminus); this interaction results in EXOC1 degradation through the proteasome degradation pathway. Forms heterodimers with envelope protein E in the endoplasmic reticulum and Golgi. In terms of assembly, homodimer; in the endoplasmic reticulum and Golgi. Interacts with protein prM. Interacts with non-structural protein 1. As to quaternary structure, homodimer; Homohexamer when secreted. Interacts with envelope protein E. Interacts (via N-terminus) with serine protease NS3. In terms of assembly, forms a heterodimer with serine protease NS3. May form homooligomers. As to quaternary structure, forms a heterodimer with NS2B. Interacts with non-structural protein 2A (via N-terminus). Interacts with NS4B. Interacts with unphosphorylated RNA-directed RNA polymerase NS5; this interaction stimulates RNA-directed RNA polymerase NS5 guanylyltransferase activity. NS3 interacts with host PDCD6IP; this interaction contributes to virion release. Interacts with serine protease NS3. In terms of assembly, homodimer. Interacts with host STAT2; this interaction prevents the establishment of cellular antiviral state. Interacts with serine protease NS3. Interacts with host TRIM23; this interaction leads to NS5 ubiquitination. Specific enzymatic cleavages in vivo yield mature proteins. The nascent capsid protein C contains a C-terminal hydrophobic domain that act as a signal sequence for translocation of prM into the lumen of the ER. Mature capsid protein C is cleaved at a site upstream of this hydrophobic domain by NS3. prM is cleaved in post-Golgi vesicles by a host furin, releasing the mature small envelope protein M, and peptide pr. Non-structural protein 2A-alpha, a C-terminally truncated form of non-structural protein 2A, results from partial cleavage by NS3. Specific enzymatic cleavages in vivo yield mature proteins peptide 2K acts as a signal sequence and is removed from the N-terminus of NS4B by the host signal peptidase in the ER lumen. Signal cleavage at the 2K-4B site requires a prior NS3 protease-mediated cleavage at the 4A-2K site. Post-translationally, cleaved in post-Golgi vesicles by a host furin, releasing the mature small envelope protein M, and peptide pr. This cleavage is incomplete as up to 30% of viral particles still carry uncleaved prM. In terms of processing, N-glycosylated. N-glycosylated. The excreted form is glycosylated and this is required for efficient secretion of the protein from infected cells. Post-translationally, polyubiquitinated; ubiquitination is probably mediated by host TRIM23 and is prerequisite for NS5-STAT2 interaction. NS5 is not ISGylated or sumoylated. In terms of processing, phosphorylated on serines residues. This phosphorylation may trigger NS5 nuclear localization. Acetylated by host KAT5. Acetylation modulates NS3 RNA-binding and -unwinding activities and plays an important role for viral replication.

The protein localises to the virion. Its subcellular location is the host nucleus. It localises to the host cytoplasm. It is found in the host perinuclear region. The protein resides in the secreted. The protein localises to the virion membrane. Its subcellular location is the host endoplasmic reticulum membrane. The enzyme catalyses Selective hydrolysis of -Xaa-Xaa-|-Yaa- bonds in which each of the Xaa can be either Arg or Lys and Yaa can be either Ser or Ala.. It catalyses the reaction RNA(n) + a ribonucleoside 5'-triphosphate = RNA(n+1) + diphosphate. It carries out the reaction a ribonucleoside 5'-triphosphate + H2O = a ribonucleoside 5'-diphosphate + phosphate + H(+). The catalysed reaction is ATP + H2O = ADP + phosphate + H(+). The enzyme catalyses a 5'-end (5'-triphosphoguanosine)-ribonucleoside in mRNA + S-adenosyl-L-methionine = a 5'-end (N(7)-methyl 5'-triphosphoguanosine)-ribonucleoside in mRNA + S-adenosyl-L-homocysteine. It catalyses the reaction a 5'-end (N(7)-methyl 5'-triphosphoguanosine)-ribonucleoside in mRNA + S-adenosyl-L-methionine = a 5'-end (N(7)-methyl 5'-triphosphoguanosine)-(2'-O-methyl-ribonucleoside) in mRNA + S-adenosyl-L-homocysteine + H(+). Plays a role in virus budding by binding to the cell membrane and gathering the viral RNA into a nucleocapsid that forms the core of a mature virus particle. During virus entry, may induce genome penetration into the host cytoplasm after hemifusion induced by the surface proteins. Can migrate to the cell nucleus where it modulates host functions. Functionally, inhibits RNA silencing by interfering with host Dicer. In terms of biological role, prevents premature fusion activity of envelope proteins in trans-Golgi by binding to envelope protein E at pH6.0. After virion release in extracellular space, gets dissociated from E dimers. Its function is as follows. Acts as a chaperone for envelope protein E during intracellular virion assembly by masking and inactivating envelope protein E fusion peptide. prM is the only viral peptide matured by host furin in the trans-Golgi network probably to avoid catastrophic activation of the viral fusion activity in acidic Golgi compartment prior to virion release. prM-E cleavage is inefficient, and many virions are only partially matured. These uncleaved prM would play a role in immune evasion. May play a role in virus budding. Exerts cytotoxic effects by activating a mitochondrial apoptotic pathway through M ectodomain. May display a viroporin activity. Functionally, binds to host cell surface receptor and mediates fusion between viral and cellular membranes. Envelope protein is synthesized in the endoplasmic reticulum in the form of heterodimer with protein prM. They play a role in virion budding in the ER, and the newly formed immature particle is covered with 60 spikes composed of heterodimer between precursor prM and envelope protein E. The virion is transported to the Golgi apparatus where the low pH causes dissociation of PrM-E heterodimers and formation of E homodimers. prM-E cleavage is inefficient, and many virions are only partially matured. These uncleaved prM would play a role in immune evasion. In terms of biological role, involved in immune evasion, pathogenesis and viral replication. Once cleaved off the polyprotein, is targeted to three destinations: the viral replication cycle, the plasma membrane and the extracellular compartment. Essential for viral replication. Required for formation of the replication complex and recruitment of other non-structural proteins to the ER-derived membrane structures. Excreted as a hexameric lipoparticle that plays a role against host immune response. Antagonizing the complement function. Binds to the host macrophages and dendritic cells. Inhibits signal transduction originating from Toll-like receptor 3 (TLR3). Its function is as follows. Component of the viral RNA replication complex that functions in virion assembly and antagonizes the host immune response. Required cofactor for the serine protease function of NS3. May have membrane-destabilizing activity and form viroporins. Functionally, displays three enzymatic activities: serine protease, NTPase and RNA helicase. NS3 serine protease, in association with NS2B, performs its autocleavage and cleaves the polyprotein at dibasic sites in the cytoplasm: C-prM, NS2A-NS2B, NS2B-NS3, NS3-NS4A, NS4A-2K and NS4B-NS5. NS3 RNA helicase binds RNA and unwinds dsRNA in the 3' to 5' direction. Also plays a role in virus assembly. In terms of biological role, regulates the ATPase activity of the NS3 helicase activity. NS4A allows NS3 helicase to conserve energy during unwinding. Its function is as follows. Functions as a signal peptide for NS4B and is required for the interferon antagonism activity of the latter. Induces the formation of ER-derived membrane vesicles where the viral replication takes place. Inhibits interferon (IFN)-induced host STAT1 phosphorylation and nuclear translocation, thereby preventing the establishment of cellular antiviral state by blocking the IFN-alpha/beta pathway. Functionally, replicates the viral (+) and (-) RNA genome, and performs the capping of genomes in the cytoplasm. NS5 methylates viral RNA cap at guanine N-7 and ribose 2'-O positions. Besides its role in RNA genome replication, also prevents the establishment of cellular antiviral state by blocking the interferon-alpha/beta (IFN-alpha/beta) signaling pathway. IFN-I induces binding of NS5 to host IFN-activated transcription factor STAT2, preventing its transcriptional activity. Host TRIM23 is the E3 ligase that interacts with and polyubiquitinates NS5 to promote its binding to STAT2 and trigger IFN-I signaling inhibition. This Yellow fever virus (strain French neurotropic vaccine FNV) (YFV) protein is Genome polyprotein.